The chain runs to 276 residues: Rhomboid protease GlpG (276 aa).

Helical transmembrane passes span 94 to 114 (GPVTWIVMLACVLVYIAMSLI), 142 to 162 (IFMHFSLMHILFNLLWWWYLG), 169 to 189 (LGSGKLIVITVISALLSGYVQ), 192 to 212 (FSGPWFGGLSGVVYALMGYVW), 229 to 249 (LIIFALLWIVAGWFDWFGMSM), and 250 to 270 (ANGAHIAGLIVGLAMAFVDTL). The active-site Nucleophile is S201. H254 is an active-site residue.

The protein belongs to the peptidase S54 family.

Its subcellular location is the cell inner membrane. The catalysed reaction is Cleaves type-1 transmembrane domains using a catalytic dyad composed of serine and histidine that are contributed by different transmembrane domains.. Functionally, rhomboid-type serine protease that catalyzes intramembrane proteolysis. The polypeptide is Rhomboid protease GlpG (Salmonella agona (strain SL483)).